The following is a 189-amino-acid chain: Thermostable direct hemolysin (189 aa).

Residues 1 to 24 (MKYQYFAKKSFLFISMLAAFKTFA) form the signal peptide. An intrachain disulfide couples Cys-175 to Cys-185.

Belongs to the TDH hemolysin family. Homodimer.

In terms of biological role, bacterial hemolysins are exotoxins that attack blood cell membranes and cause cell rupture by mechanisms not clearly defined. This Vibrio mimicus protein is Thermostable direct hemolysin (tdh).